The primary structure comprises 482 residues: MSDKQATVLVVDDETRSQDALRRTLDEEFRVLTVSSADEARALLLRQPVSVILCDQRMPGLTGVEFLKEVRERWPEIVRIVISGYTDSEDIIAGVNEAGIYQYILKPWVPDHLIDTVRQAVEAQGLQGDMHRLDLELRTSTPVLRQRSSQKLASAQSAFNFERIVRAPGSPLDAVCEVAARVARYDLPVMVLGESGTGKELLARAIHYASPRAARAFVSENCAAVPDNLLESELFGHKRGAFTGAYEDHAGLFQRANGGTIFLDEIGDTSPAFQVKLLRVLQEGEVRPVGSPRWIPVDVRVIAATHCNLESDVHAGRFREDLYYRIAGVTISMPPLRERSGDLQPIAAKLLEQVAQELARPGLYFGGDALAAMMAYPWPGNIRELRNEIYRAVALSSGEEIRAQLFSRKVLHGQPGTVKRGPHVQTFPQSGTLQERLDAIEAVVLKEALLRHRWNKTHAAKELGLSRVGLRQKLLRFGLEEK.

Positions 7 to 121 (TVLVVDDETR…HLIDTVRQAV (115 aa)) constitute a Response regulatory domain. Aspartate 55 is subject to 4-aspartylphosphate. Residues 167–394 (APGSPLDAVC…LRNEIYRAVA (228 aa)) enclose the Sigma-54 factor interaction domain. Residues 193 to 200 (GESGTGKE) and 265 to 274 (EIGDTSPAFQ) each bind ATP. The H-T-H motif DNA-binding region spans 456 to 475 (KTHAAKELGLSRVGLRQKLL).

It localises to the cytoplasm. Functionally, probable member of the two-component regulatory system involved in the regulation of the hydrogenase activity. HoxA is probably phosphorylated by a sensory component (which could be HoxX) and then acts in conjunction with sigma-54 as a transcriptional activator. This is Hydrogenase transcriptional regulatory protein HoxA (hoxA) from Cupriavidus necator (strain ATCC 17699 / DSM 428 / KCTC 22496 / NCIMB 10442 / H16 / Stanier 337) (Ralstonia eutropha).